Reading from the N-terminus, the 443-residue chain is Ribulose bisphosphate carboxylase large chain (443 aa).

2 residues coordinate substrate: Asn89 and Thr139. Catalysis depends on Lys141, which acts as the Proton acceptor. Position 143 (Lys143) interacts with substrate. Mg(2+) is bound by residues Lys167, Asp169, and Glu170. Position 167 is an N6-carboxylysine (Lys167). The Proton acceptor role is filled by His260. Substrate is bound by residues Arg261, His293, and Ser345.

Belongs to the RuBisCO large chain family. Type I subfamily. As to quaternary structure, heterohexadecamer of 8 large chains and 8 small chains; disulfide-linked. The disulfide link is formed within the large subunit homodimers. The cofactor is Mg(2+). In terms of processing, the disulfide bond which can form in the large chain dimeric partners within the hexadecamer appears to be associated with oxidative stress and protein turnover.

It localises to the plastid. The protein resides in the chloroplast. The enzyme catalyses 2 (2R)-3-phosphoglycerate + 2 H(+) = D-ribulose 1,5-bisphosphate + CO2 + H2O. The catalysed reaction is D-ribulose 1,5-bisphosphate + O2 = 2-phosphoglycolate + (2R)-3-phosphoglycerate + 2 H(+). Functionally, ruBisCO catalyzes two reactions: the carboxylation of D-ribulose 1,5-bisphosphate, the primary event in carbon dioxide fixation, as well as the oxidative fragmentation of the pentose substrate in the photorespiration process. Both reactions occur simultaneously and in competition at the same active site. The protein is Ribulose bisphosphate carboxylase large chain of Buddleja davidii (Butterfly bush).